A 380-amino-acid chain; its full sequence is Queuine tRNA-ribosyltransferase (380 aa).

Asp96 functions as the Proton acceptor in the catalytic mechanism. Substrate is bound by residues 96 to 100 (DSGGF), Asp150, Gln193, and Gly220. The segment at 251-257 (GVGAPDS) is RNA binding. Residue Asp270 is the Nucleophile of the active site. The tract at residues 275–279 (TRIAR) is RNA binding; important for wobble base 34 recognition. Cys308, Cys310, Cys313, and His339 together coordinate Zn(2+).

It belongs to the queuine tRNA-ribosyltransferase family. As to quaternary structure, homodimer. Within each dimer, one monomer is responsible for RNA recognition and catalysis, while the other monomer binds to the replacement base PreQ1. The cofactor is Zn(2+).

It carries out the reaction 7-aminomethyl-7-carbaguanine + guanosine(34) in tRNA = 7-aminomethyl-7-carbaguanosine(34) in tRNA + guanine. Its pathway is tRNA modification; tRNA-queuosine biosynthesis. Its function is as follows. Catalyzes the base-exchange of a guanine (G) residue with the queuine precursor 7-aminomethyl-7-deazaguanine (PreQ1) at position 34 (anticodon wobble position) in tRNAs with GU(N) anticodons (tRNA-Asp, -Asn, -His and -Tyr). Catalysis occurs through a double-displacement mechanism. The nucleophile active site attacks the C1' of nucleotide 34 to detach the guanine base from the RNA, forming a covalent enzyme-RNA intermediate. The proton acceptor active site deprotonates the incoming PreQ1, allowing a nucleophilic attack on the C1' of the ribose to form the product. After dissociation, two additional enzymatic reactions on the tRNA convert PreQ1 to queuine (Q), resulting in the hypermodified nucleoside queuosine (7-(((4,5-cis-dihydroxy-2-cyclopenten-1-yl)amino)methyl)-7-deazaguanosine). The polypeptide is Queuine tRNA-ribosyltransferase (Streptococcus pneumoniae (strain P1031)).